Consider the following 741-residue polypeptide: ATP-dependent RNA helicase DRS1 (741 aa).

Residues 35–44 (VKNKKNKKSK) show a composition bias toward basic residues. Disordered regions lie at residues 35 to 63 (VKNK…INPN) and 106 to 200 (GGLV…EDTA). Acidic residues-rich tracts occupy residues 118–147 (KEEE…EELA) and 159–200 (VIDE…EDTA). A Q motif motif is present at residues 222–250 (TTFQTLQLSRPVLKGLSQLGYTKPSPIQS). In terms of domain architecture, Helicase ATP-binding spans 253–429 (IPIALLGRDI…QLSLQRPVRI (177 aa)). 266 to 273 (AVTGSGKT) contacts ATP. The DEAD box motif lies at 376–379 (DEAD). The 146-residue stretch at 458–603 (LLFQLLKKLD…GGEVKGKAVS (146 aa)) folds into the Helicase C-terminal domain. Residues 610–657 (DVEQLNKIVESKQEIIEEVLDEEKQAKEILQAEMQLAKASNMMKHEKE) are a coiled coil. The tract at residues 650 to 741 (NMMKHEKEIQ…GSSKGGKRRK (92 aa)) is disordered. Over residues 652–672 (MKHEKEIQSRPKRTWFESEKD) the composition is skewed to basic and acidic residues. Positions 686–697 (KHGKKVNSKKRK) are enriched in basic residues. Residues 698 to 723 (AIEVKKDDGGRSYKKTKVDRITDQKR) show a composition bias toward basic and acidic residues.

This sequence belongs to the DEAD box helicase family. DDX27/DRS1 subfamily. In terms of assembly, associates with pre-ribosomal particles.

Its subcellular location is the nucleus. The protein resides in the nucleolus. The catalysed reaction is ATP + H2O = ADP + phosphate + H(+). Its function is as follows. ATP-binding RNA helicase involved in ribosome assembly. This Scheffersomyces stipitis (strain ATCC 58785 / CBS 6054 / NBRC 10063 / NRRL Y-11545) (Yeast) protein is ATP-dependent RNA helicase DRS1 (DRS1).